The following is a 502-amino-acid chain: Maturase K (502 aa).

This sequence belongs to the intron maturase 2 family. MatK subfamily.

It localises to the plastid. It is found in the chloroplast. Usually encoded in the trnK tRNA gene intron. Probably assists in splicing its own and other chloroplast group II introns. This Brassica campestris (Field mustard) protein is Maturase K.